Reading from the N-terminus, the 229-residue chain is MAKKGKKYLEAAKAVDPTKQYTPEEAVDLLKKIDFAKFDETVEVAYRLNVDPKQADQQIRGAVVLPNGTGKTAKVIVFAQGDQAKAAEDAGADIVGAEDLVQKIQDGWLDFDVAVATPPMMAQVGRLGRVLGPKGLMPNPKTGTVTMDTAKAVKDIKAGQVAYRVDKAGIIHAPIGKKSFDADKLLENFKAMNDIVLKARPASTKGIYIKSLALTATMAPGIKVNPSDF.

Belongs to the universal ribosomal protein uL1 family. In terms of assembly, part of the 50S ribosomal subunit.

Binds directly to 23S rRNA. The L1 stalk is quite mobile in the ribosome, and is involved in E site tRNA release. Functionally, protein L1 is also a translational repressor protein, it controls the translation of the L11 operon by binding to its mRNA. This chain is Large ribosomal subunit protein uL1, found in Lacticaseibacillus casei (strain BL23) (Lactobacillus casei).